The chain runs to 393 residues: NAD(P)H-quinone oxidoreductase subunit H, chloroplastic (393 aa).

This sequence belongs to the complex I 49 kDa subunit family. In terms of assembly, NDH is composed of at least 16 different subunits, 5 of which are encoded in the nucleus.

It localises to the plastid. It is found in the chloroplast thylakoid membrane. The catalysed reaction is a plastoquinone + NADH + (n+1) H(+)(in) = a plastoquinol + NAD(+) + n H(+)(out). It catalyses the reaction a plastoquinone + NADPH + (n+1) H(+)(in) = a plastoquinol + NADP(+) + n H(+)(out). Functionally, NDH shuttles electrons from NAD(P)H:plastoquinone, via FMN and iron-sulfur (Fe-S) centers, to quinones in the photosynthetic chain and possibly in a chloroplast respiratory chain. The immediate electron acceptor for the enzyme in this species is believed to be plastoquinone. Couples the redox reaction to proton translocation, and thus conserves the redox energy in a proton gradient. This chain is NAD(P)H-quinone oxidoreductase subunit H, chloroplastic, found in Oenothera biennis (German evening primrose).